A 498-amino-acid polypeptide reads, in one-letter code: uncharacterized protein (498 aa).

329 to 336 (GNPGTGKS) lines the ATP pocket.

Its subcellular location is the secreted. It localises to the cell wall. This is an uncharacterized protein from Mycobacterium tuberculosis (strain CDC 1551 / Oshkosh).